The chain runs to 338 residues: Glycerol-3-phosphate dehydrogenase [NAD(P)+] (338 aa).

Ser13, Trp14, and Lys108 together coordinate NADPH. Residues Lys108, Gly139, and Ser141 each coordinate sn-glycerol 3-phosphate. NADPH is bound at residue Ala143. Positions 194, 247, 257, 258, and 259 each coordinate sn-glycerol 3-phosphate. Residue Lys194 is the Proton acceptor of the active site. An NADPH-binding site is contributed by Arg258. Positions 282 and 284 each coordinate NADPH.

The protein belongs to the NAD-dependent glycerol-3-phosphate dehydrogenase family.

The protein localises to the cytoplasm. The enzyme catalyses sn-glycerol 3-phosphate + NAD(+) = dihydroxyacetone phosphate + NADH + H(+). It carries out the reaction sn-glycerol 3-phosphate + NADP(+) = dihydroxyacetone phosphate + NADPH + H(+). It functions in the pathway membrane lipid metabolism; glycerophospholipid metabolism. Catalyzes the reduction of the glycolytic intermediate dihydroxyacetone phosphate (DHAP) to sn-glycerol 3-phosphate (G3P), the key precursor for phospholipid synthesis. In Streptococcus pneumoniae (strain Hungary19A-6), this protein is Glycerol-3-phosphate dehydrogenase [NAD(P)+].